A 297-amino-acid polypeptide reads, in one-letter code: Homoserine kinase (297 aa).

82–92 (PVSRGLGSSAA) serves as a coordination point for ATP.

Belongs to the GHMP kinase family. Homoserine kinase subfamily.

It localises to the cytoplasm. It catalyses the reaction L-homoserine + ATP = O-phospho-L-homoserine + ADP + H(+). The protein operates within amino-acid biosynthesis; L-threonine biosynthesis; L-threonine from L-aspartate: step 4/5. Functionally, catalyzes the ATP-dependent phosphorylation of L-homoserine to L-homoserine phosphate. The sequence is that of Homoserine kinase from Clostridium botulinum (strain Okra / Type B1).